We begin with the raw amino-acid sequence, 300 residues long: tRNA pseudouridine synthase B (300 aa).

D44 acts as the Nucleophile in catalysis.

The protein belongs to the pseudouridine synthase TruB family. Type 1 subfamily.

It catalyses the reaction uridine(55) in tRNA = pseudouridine(55) in tRNA. Its function is as follows. Responsible for synthesis of pseudouridine from uracil-55 in the psi GC loop of transfer RNAs. The chain is tRNA pseudouridine synthase B from Corynebacterium diphtheriae (strain ATCC 700971 / NCTC 13129 / Biotype gravis).